Here is a 400-residue protein sequence, read N- to C-terminus: Diphosphomevalonate decarboxylase (400 aa).

Residues 25 to 28, Arg80, 155 to 160, and Thr211 each bind (R)-5-diphosphomevalonate; these read YWGK and SGSACR.

It belongs to the diphosphomevalonate decarboxylase family. As to quaternary structure, homodimer.

The protein resides in the cytoplasm. The enzyme catalyses (R)-5-diphosphomevalonate + ATP = isopentenyl diphosphate + ADP + phosphate + CO2. The protein operates within steroid biosynthesis; cholesterol biosynthesis. Functionally, catalyzes the ATP dependent decarboxylation of (R)-5-diphosphomevalonate to form isopentenyl diphosphate (IPP). Functions in the mevalonate (MVA) pathway leading to isopentenyl diphosphate (IPP), a key precursor for the biosynthesis of isoprenoids and sterol synthesis. The protein is Diphosphomevalonate decarboxylase (mvd) of Danio rerio (Zebrafish).